Reading from the N-terminus, the 369-residue chain is Anthranilate phosphoribosyltransferase (369 aa).

5-phospho-alpha-D-ribose 1-diphosphate-binding positions include glycine 85, 88–89, threonine 93, 95–98, 113–121, and serine 125; these read GD, NLST, and KHGNRAASS. Residue glycine 85 participates in anthranilate binding. A Mg(2+)-binding site is contributed by serine 97. Asparagine 116 serves as a coordination point for anthranilate. Arginine 171 lines the anthranilate pocket. Residues aspartate 229 and glutamate 230 each contribute to the Mg(2+) site.

Belongs to the anthranilate phosphoribosyltransferase family. As to quaternary structure, homodimer. Mg(2+) is required as a cofactor.

It carries out the reaction N-(5-phospho-beta-D-ribosyl)anthranilate + diphosphate = 5-phospho-alpha-D-ribose 1-diphosphate + anthranilate. It functions in the pathway amino-acid biosynthesis; L-tryptophan biosynthesis; L-tryptophan from chorismate: step 2/5. Catalyzes the transfer of the phosphoribosyl group of 5-phosphorylribose-1-pyrophosphate (PRPP) to anthranilate to yield N-(5'-phosphoribosyl)-anthranilate (PRA). This chain is Anthranilate phosphoribosyltransferase, found in Frankia alni (strain DSM 45986 / CECT 9034 / ACN14a).